A 620-amino-acid chain; its full sequence is Chaperone protein DnaK (620 aa).

Thr-197 carries the post-translational modification Phosphothreonine; by autocatalysis. Residues 597–620 (AMANKNNAEQPKKKDDDVIDAEVE) form a disordered region.

Belongs to the heat shock protein 70 family.

Acts as a chaperone. The chain is Chaperone protein DnaK from Helicobacter pylori (strain G27).